A 155-amino-acid chain; its full sequence is Catabolic 3-dehydroquinase (155 aa).

Residue tyrosine 24 is the Proton acceptor of the active site. Substrate is bound by residues asparagine 75, histidine 81, and aspartate 88. Catalysis depends on histidine 101, which acts as the Proton donor. Residues 102-103 (VS) and arginine 112 contribute to the substrate site.

Belongs to the type-II 3-dehydroquinase family. As to quaternary structure, homododecamer. Adopts a ring-like structure, composed of an arrangement of two hexameric rings stacked on top of one another.

It catalyses the reaction 3-dehydroquinate = 3-dehydroshikimate + H2O. It participates in aromatic compound metabolism; 3,4-dihydroxybenzoate biosynthesis; 3,4-dihydroxybenzoate from 3-dehydroquinate: step 1/2. Is involved in the catabolism of quinate. Allows the utilization of quinate as carbon source via the beta-ketoadipate pathway. The chain is Catabolic 3-dehydroquinase from Penicillium rubens (strain ATCC 28089 / DSM 1075 / NRRL 1951 / Wisconsin 54-1255) (Penicillium chrysogenum).